Here is a 631-residue protein sequence, read N- to C-terminus: Phosphomethylpyrimidine synthase (631 aa).

Residues asparagine 239, methionine 268, tyrosine 297, histidine 333, 353–355 (SRG), 394–397 (DGLR), and glutamate 433 each bind substrate. Histidine 437 is a Zn(2+) binding site. Tyrosine 460 lines the substrate pocket. Zn(2+) is bound at residue histidine 501. 3 residues coordinate [4Fe-4S] cluster: cysteine 581, cysteine 584, and cysteine 589.

It belongs to the ThiC family. Homodimer. [4Fe-4S] cluster serves as cofactor.

The catalysed reaction is 5-amino-1-(5-phospho-beta-D-ribosyl)imidazole + S-adenosyl-L-methionine = 4-amino-2-methyl-5-(phosphooxymethyl)pyrimidine + CO + 5'-deoxyadenosine + formate + L-methionine + 3 H(+). The protein operates within cofactor biosynthesis; thiamine diphosphate biosynthesis. Catalyzes the synthesis of the hydroxymethylpyrimidine phosphate (HMP-P) moiety of thiamine from aminoimidazole ribotide (AIR) in a radical S-adenosyl-L-methionine (SAM)-dependent reaction. This is Phosphomethylpyrimidine synthase from Escherichia coli O127:H6 (strain E2348/69 / EPEC).